The following is a 356-amino-acid chain: Red-sensitive opsin-2 (356 aa).

Topologically, residues 1–48 are extracellular; sequence MAEWANAAFAARRRGDETTRDNAFSYTNSNNTRDPFEGPNYHIAPRWV. The N-linked (GlcNAc...) asparagine glycan is linked to asparagine 30. Residues 49–73 traverse the membrane as a helical segment; that stretch reads YNVATVWMFFVVVASTFTNGLVLVA. Residues 74 to 85 lie on the Cytoplasmic side of the membrane; the sequence is TAKFKKLRHPLN. The helical transmembrane segment at 86-111 threads the bilayer; that stretch reads WILVNLAIADLGETLFASTISVINQV. Over 112–125 the chain is Extracellular; it reads FGYFILGHPMCIFE. The cysteines at positions 122 and 199 are disulfide-linked. Residues 126 to 145 traverse the membrane as a helical segment; that stretch reads GYTVSVCGIAGLWSLTVISW. At 146–164 the chain is on the cytoplasmic side; sequence ERWVVVCKPFGNVKFDGKW. The chain crosses the membrane as a helical span at residues 165-188; it reads ASAGIIFSWVWAAVWCAPPIFGWS. The Extracellular segment spans residues 189-214; it reads RYWPHGLKTSCGPDVFGGNEDPGVQS. A helical transmembrane segment spans residues 215 to 242; it reads YMLVLMITCCILPLAIIILCYIAVFLAI. The Cytoplasmic segment spans residues 243-264; that stretch reads HAVAQQQKDSESTQKAEKEVSR. The chain crosses the membrane as a helical span at residues 265 to 288; that stretch reads MVVVMILAFCLCWGPYTAFACFAA. Residues 289–296 are Extracellular-facing; it reads ANPGYAFH. Residues 297–321 form a helical membrane-spanning segment; the sequence is PLAAAMPAYFAKSATIYNPIIYVFM. Lysine 308 is subject to N6-(retinylidene)lysine. The Cytoplasmic segment spans residues 322-356; that stretch reads NRQFRVCIMQLFGKKVDDGSEVSTSKTEVSSVAPA.

The protein belongs to the G-protein coupled receptor 1 family. Opsin subfamily. Phosphorylated on some or all of the serine and threonine residues present in the C-terminal region.

It is found in the membrane. In terms of biological role, visual pigments are the light-absorbing molecules that mediate vision. They consist of an apoprotein, opsin, covalently linked to cis-retinal. This is Red-sensitive opsin-2 (opn1lw2) from Danio rerio (Zebrafish).